The sequence spans 195 residues: Imidazoleglycerol-phosphate dehydratase (195 aa).

This sequence belongs to the imidazoleglycerol-phosphate dehydratase family.

The protein localises to the cytoplasm. It carries out the reaction D-erythro-1-(imidazol-4-yl)glycerol 3-phosphate = 3-(imidazol-4-yl)-2-oxopropyl phosphate + H2O. The protein operates within amino-acid biosynthesis; L-histidine biosynthesis; L-histidine from 5-phospho-alpha-D-ribose 1-diphosphate: step 6/9. The polypeptide is Imidazoleglycerol-phosphate dehydratase (Maridesulfovibrio salexigens (strain ATCC 14822 / DSM 2638 / NCIMB 8403 / VKM B-1763) (Desulfovibrio salexigens)).